We begin with the raw amino-acid sequence, 119 residues long: Holo-[acyl-carrier-protein] synthase (119 aa).

Mg(2+)-binding residues include D8 and E58.

The protein belongs to the P-Pant transferase superfamily. AcpS family. Mg(2+) is required as a cofactor.

It is found in the cytoplasm. It catalyses the reaction apo-[ACP] + CoA = holo-[ACP] + adenosine 3',5'-bisphosphate + H(+). Transfers the 4'-phosphopantetheine moiety from coenzyme A to a Ser of acyl-carrier-protein. The chain is Holo-[acyl-carrier-protein] synthase from Streptococcus mutans serotype c (strain ATCC 700610 / UA159).